The sequence spans 286 residues: Phosphate import ATP-binding protein PstB (286 aa).

The ABC transporter domain occupies 40 to 281 (IAVRNLDFYY…PREQRTQEYI (242 aa)). Residue 72–79 (GPSGCGKS) coordinates ATP.

Belongs to the ABC transporter superfamily. Phosphate importer (TC 3.A.1.7) family. The complex is composed of two ATP-binding proteins (PstB), two transmembrane proteins (PstC and PstA) and a solute-binding protein (PstS).

The protein localises to the cell inner membrane. It catalyses the reaction phosphate(out) + ATP + H2O = ADP + 2 phosphate(in) + H(+). In terms of biological role, part of the ABC transporter complex PstSACB involved in phosphate import. Responsible for energy coupling to the transport system. This is Phosphate import ATP-binding protein PstB from Granulibacter bethesdensis (strain ATCC BAA-1260 / CGDNIH1).